The following is a 491-amino-acid chain: UDP-N-acetylmuramoyl-L-alanyl-D-glutamate--2,6-diaminopimelate ligase (491 aa).

Ser-30 is a UDP-N-acetyl-alpha-D-muramoyl-L-alanyl-D-glutamate binding site. 108–114 contacts ATP; that stretch reads GTNGKTT. Residues Asn-149, 150–151, Ser-177, and Arg-185 contribute to the UDP-N-acetyl-alpha-D-muramoyl-L-alanyl-D-glutamate site; that span reads TT. Residue Lys-217 is modified to N6-carboxylysine. Meso-2,6-diaminopimelate contacts are provided by residues Arg-383, 407-410, Gly-457, and Glu-461; that span reads DNPR. A Meso-diaminopimelate recognition motif motif is present at residues 407 to 410; the sequence is DNPR.

The protein belongs to the MurCDEF family. MurE subfamily. It depends on Mg(2+) as a cofactor. Post-translationally, carboxylation is probably crucial for Mg(2+) binding and, consequently, for the gamma-phosphate positioning of ATP.

It is found in the cytoplasm. It catalyses the reaction UDP-N-acetyl-alpha-D-muramoyl-L-alanyl-D-glutamate + meso-2,6-diaminopimelate + ATP = UDP-N-acetyl-alpha-D-muramoyl-L-alanyl-gamma-D-glutamyl-meso-2,6-diaminopimelate + ADP + phosphate + H(+). It participates in cell wall biogenesis; peptidoglycan biosynthesis. Its function is as follows. Catalyzes the addition of meso-diaminopimelic acid to the nucleotide precursor UDP-N-acetylmuramoyl-L-alanyl-D-glutamate (UMAG) in the biosynthesis of bacterial cell-wall peptidoglycan. The polypeptide is UDP-N-acetylmuramoyl-L-alanyl-D-glutamate--2,6-diaminopimelate ligase (Bacillus cereus (strain ATCC 14579 / DSM 31 / CCUG 7414 / JCM 2152 / NBRC 15305 / NCIMB 9373 / NCTC 2599 / NRRL B-3711)).